We begin with the raw amino-acid sequence, 644 residues long: Methionine--tRNA ligase (644 aa).

Positions 14-24 (YYPSAKLHIGN) match the 'HIGH' region motif. 4 residues coordinate Zn(2+): C129, C132, C146, and C149. Residues 299–303 (KMSKS) carry the 'KMSKS' region motif. K302 contacts ATP. A tRNA-binding domain is found at 542-644 (DVDKLDLRVV…EDIPTGSIVR (103 aa)).

This sequence belongs to the class-I aminoacyl-tRNA synthetase family. MetG type 2A subfamily. In terms of assembly, homodimer. It depends on Zn(2+) as a cofactor.

The protein localises to the cytoplasm. The catalysed reaction is tRNA(Met) + L-methionine + ATP = L-methionyl-tRNA(Met) + AMP + diphosphate. In terms of biological role, is required not only for elongation of protein synthesis but also for the initiation of all mRNA translation through initiator tRNA(fMet) aminoacylation. The polypeptide is Methionine--tRNA ligase (metG) (Clostridium acetobutylicum (strain ATCC 824 / DSM 792 / JCM 1419 / IAM 19013 / LMG 5710 / NBRC 13948 / NRRL B-527 / VKM B-1787 / 2291 / W)).